A 311-amino-acid chain; its full sequence is GTP cyclohydrolase FolE2 (311 aa).

The protein belongs to the GTP cyclohydrolase IV family.

The catalysed reaction is GTP + H2O = 7,8-dihydroneopterin 3'-triphosphate + formate + H(+). Its pathway is cofactor biosynthesis; 7,8-dihydroneopterin triphosphate biosynthesis; 7,8-dihydroneopterin triphosphate from GTP: step 1/1. Its function is as follows. Converts GTP to 7,8-dihydroneopterin triphosphate. The polypeptide is GTP cyclohydrolase FolE2 (Xanthomonas campestris pv. campestris (strain 8004)).